A 209-amino-acid chain; its full sequence is Holliday junction branch migration complex subunit RuvA (209 aa).

The interval 1 to 64 (MIGKLKGLVD…EDSIKLYGFA (64 aa)) is domain I. Residues 65–143 (SETEREWFRL…ALGASLHTLA (79 aa)) form a domain II region. The flexible linker stretch occupies residues 144 to 154 (GAGSEGAGVEA). Positions 155 to 209 (PASGAVSDAISVLVNLGFGRSQAAVAVAASSKALGSGAGAGDLAKRALQELAQSG) are domain III.

This sequence belongs to the RuvA family. Homotetramer. Forms an RuvA(8)-RuvB(12)-Holliday junction (HJ) complex. HJ DNA is sandwiched between 2 RuvA tetramers; dsDNA enters through RuvA and exits via RuvB. An RuvB hexamer assembles on each DNA strand where it exits the tetramer. Each RuvB hexamer is contacted by two RuvA subunits (via domain III) on 2 adjacent RuvB subunits; this complex drives branch migration. In the full resolvosome a probable DNA-RuvA(4)-RuvB(12)-RuvC(2) complex forms which resolves the HJ.

It is found in the cytoplasm. Its function is as follows. The RuvA-RuvB-RuvC complex processes Holliday junction (HJ) DNA during genetic recombination and DNA repair, while the RuvA-RuvB complex plays an important role in the rescue of blocked DNA replication forks via replication fork reversal (RFR). RuvA specifically binds to HJ cruciform DNA, conferring on it an open structure. The RuvB hexamer acts as an ATP-dependent pump, pulling dsDNA into and through the RuvAB complex. HJ branch migration allows RuvC to scan DNA until it finds its consensus sequence, where it cleaves and resolves the cruciform DNA. This Methylocella silvestris (strain DSM 15510 / CIP 108128 / LMG 27833 / NCIMB 13906 / BL2) protein is Holliday junction branch migration complex subunit RuvA.